The following is an 865-amino-acid chain: Alanine--tRNA ligase (865 aa).

The Zn(2+) site is built by H554, H558, C656, and H660.

This sequence belongs to the class-II aminoacyl-tRNA synthetase family. It depends on Zn(2+) as a cofactor.

It is found in the cytoplasm. It carries out the reaction tRNA(Ala) + L-alanine + ATP = L-alanyl-tRNA(Ala) + AMP + diphosphate. In terms of biological role, catalyzes the attachment of alanine to tRNA(Ala) in a two-step reaction: alanine is first activated by ATP to form Ala-AMP and then transferred to the acceptor end of tRNA(Ala). Also edits incorrectly charged Ser-tRNA(Ala) and Gly-tRNA(Ala) via its editing domain. The protein is Alanine--tRNA ligase of Francisella tularensis subsp. novicida (strain U112).